The sequence spans 837 residues: Espin (837 aa).

9 ANK repeats span residues 1–31 (MALEQAMQAARRGDLDVLRSLHAAGLLGPSL), 35–66 (LDALPVHHAARSGKLHCLRYLVEEVALPAVSR), 69–99 (NGATPAHDAAATGYLSCLQWLLTQGGCRVQE), 103–132 (SGATVLHLAARFGHPDVVNWLLYQGGANSA), 137–167 (TGALPIHYAAAKGDLPSMKLLVGHYPEGVNA), 171–201 (NGATPLYLACQEGHLEVTKYLVQECSADPHL), 205–235 (DGMTPLHAAAQMGHNPVLVWLVSFADVSFEQ), 238–267 (DGATAMHFAASRGHTKVLSWLLLHGAEISQ), and 270–299 (WGGTPLHDAAENGELECCQILAVNGAGLDV). Ser337 and Ser341 each carry phosphoserine. Positions 339 to 348 (DPSMDLEAKQ) are enriched in basic and acidic residues. 4 disordered regions span residues 339–459 (DPSM…VGLH), 477–712 (DSLK…PATL), 745–767 (KLQQKMQEEEEQRRKEEEEEARL), and 785–816 (EREQKRKEEERQKLEEIQRAKEQSEKLRTLGY). Polar residues predominate over residues 351-364 (SGMSSPNTTMSVQP). Over residues 376–395 (LSNYDSCSSSHSSSKGQRST) the composition is skewed to low complexity. Phosphoserine is present on residues Ser400 and Ser401. The span at 423–455 (SLPPPPPPSFPPPPPPGTQLPPPPPGYPAPNPP) shows a compositional bias: pro residues. 3 positions are modified to phosphoserine: Ser497, Ser504, and Ser531. Pro residues predominate over residues 581–604 (LPPPPPPPPLPEALSSPPPAPPLP). Low complexity predominate over residues 617–626 (SSSSTGSTKS). Polar residues-rich tracts occupy residues 627–636 (FNMMSPTGDN) and 651–662 (PTPQSKGLTTVF). A Phosphoserine modification is found at Ser631. Residues 635-652 (DNSELLAEIKAGKSLKPT) form the WH2 domain. The span at 663–673 (SGSGQPASQPE) shows a compositional bias: low complexity. A phosphoserine mark is found at Ser670, Ser674, and Ser680. Positions 738-814 (KRQVMVRKLQ…KEQSEKLRTL (77 aa)) form a coiled coil.

As to quaternary structure, monomer. Interacts with PFN2. Binds F-actin in a Ca(2+)-resistant fashion. Interacts (via N-terminal) with BAIAP2 (via SH3-domain). Interacts with MYO3A (via C-terminus). Interacts with MYO3B (via C-terminus). Expressed at high concentration in the microvillar parallel actin bundle (PAB) of hair cells stereocilia in the cochlea and vestibular system. Detected also at high levels of a number of other sensory cell types, including taste receptor cells, solitary chemoreceptor cells, vomeronasal sensory neurons and Merkel cells. Isoform 1 is detected in testis. Isoforms 2 is detected in small intestine and kidney (at protein level). Isoforms 3, 4, 6 and 8 are expressed in Purkinje cells dendritic spines.

The protein resides in the cytoplasm. It localises to the cytoskeleton. Its subcellular location is the cell projection. The protein localises to the stereocilium. It is found in the microvillus. The protein resides in the cell junction. It localises to the dendritic spine. Functionally, multifunctional actin-bundling protein. Plays a major role in regulating the organization, dimension, dynamics and signaling capacities of the actin filament-rich microvilli in the mechanosensory and chemosensory cells. Required for the assembly and stabilization of the stereociliary parallel actin bundles. Plays a crucial role in the formation and maintenance of inner ear hair cell stereocilia. Involved in the elongation of actin in stereocilia. In extrastriolar hair cells, required for targeting MYO3B to stereocilia tips, and for regulation of stereocilia diameter and staircase formation. This is Espin (Espn) from Rattus norvegicus (Rat).